We begin with the raw amino-acid sequence, 355 residues long: Methionine import ATP-binding protein MetN (355 aa).

One can recognise an ABC transporter domain in the interval 8–250 (LKNIDITFTQ…PQEDLTQEFI (243 aa)). 42–49 (GYSGAGKS) is an ATP binding site.

The protein belongs to the ABC transporter superfamily. Methionine importer (TC 3.A.1.24) family. In terms of assembly, the complex is composed of two ATP-binding proteins (MetN), two transmembrane proteins (MetI) and a solute-binding protein (MetQ).

It is found in the cell membrane. The enzyme catalyses L-methionine(out) + ATP + H2O = L-methionine(in) + ADP + phosphate + H(+). It catalyses the reaction D-methionine(out) + ATP + H2O = D-methionine(in) + ADP + phosphate + H(+). In terms of biological role, part of the ABC transporter complex MetNIQ involved in methionine import. Responsible for energy coupling to the transport system. The chain is Methionine import ATP-binding protein MetN from Streptococcus thermophilus (strain ATCC BAA-250 / LMG 18311).